The sequence spans 132 residues: Fatty acid-binding protein, intestinal (132 aa).

The residue at position 2 (alanine 2) is an N-acetylalanine. Hexadecanoate is bound by residues tryptophan 83 and arginine 107. Residues tryptophan 83 and arginine 107 each contribute to the tetradecanoate site.

It belongs to the calycin superfamily. Fatty-acid binding protein (FABP) family. Expressed in the small intestine and at much lower levels in the large intestine. Highest expression levels in the jejunum.

The protein resides in the cytoplasm. Functionally, FABPs are thought to play a role in the intracellular transport of long-chain fatty acids and their acyl-CoA esters. FABP2 is probably involved in triglyceride-rich lipoprotein synthesis. Binds saturated long-chain fatty acids with a high affinity, but binds with a lower affinity to unsaturated long-chain fatty acids. FABP2 may also help maintain energy homeostasis by functioning as a lipid sensor. The sequence is that of Fatty acid-binding protein, intestinal (FABP2) from Homo sapiens (Human).